The chain runs to 723 residues: Aspartate--tRNA(Asp/Asn) ligase 1 (723 aa).

Residue Glu206 coordinates L-aspartate. The segment at 230–233 (QLFK) is aspartate. Arg252 contacts L-aspartate. ATP contacts are provided by residues 252 to 254 (RDE) and Gln261. His481 is an L-aspartate binding site. Residue Glu516 participates in ATP binding. L-aspartate is bound at residue Arg523. Residue 568-571 (GMDR) participates in ATP binding.

This sequence belongs to the class-II aminoacyl-tRNA synthetase family. Type 1 subfamily. In terms of assembly, homodimer.

The protein resides in the cytoplasm. It carries out the reaction tRNA(Asx) + L-aspartate + ATP = L-aspartyl-tRNA(Asx) + AMP + diphosphate. Its function is as follows. Aspartyl-tRNA synthetase with relaxed tRNA specificity since it is able to aspartylate not only its cognate tRNA(Asp) but also tRNA(Asn). Reaction proceeds in two steps: L-aspartate is first activated by ATP to form Asp-AMP and then transferred to the acceptor end of tRNA(Asp/Asn). This chain is Aspartate--tRNA(Asp/Asn) ligase 1, found in Syntrophus aciditrophicus (strain SB).